A 445-amino-acid polypeptide reads, in one-letter code: MRLSRYFLPVLKETPAEAQIVSHRLMLRAGMIKQASAGIYSWLPLGYKVLRRIEEIVHEEQQRAGHIPMLMPTLQSADLWRESGRYDDYGQEMLRITDRHGRDMLYGPTNEELITDIFRSNVGSYKDLPLTLYHIQWKFRDEVRPRFGVMRGREFLMKDGYNFDLTKEAALHAYNRHLVSYLRSYERMGLQAIPMRADGGPIGGDYTHEFLVLAETGESEVFYDAEITDLSFGDRQIDYDDVGQCQAVLEEFTSRYARTDETHDPDAFAKVPEARRRSARGIEVGQIFYFGTKYSDAMGATVIDKDQNQVPVHMGSHGIGVSRLLGAIIEASHDDKGIIWPEGVTPFHCGIVNLKQGDAAADAACEGLYDALTKAGLEPLYDDRNERAGGKFATMDLIGLPWRITVGPRGLKAGVVELTSRKTGESEELSPEAAVAKVVARYAGA.

This sequence belongs to the class-II aminoacyl-tRNA synthetase family. ProS type 2 subfamily. Homodimer.

It localises to the cytoplasm. It carries out the reaction tRNA(Pro) + L-proline + ATP = L-prolyl-tRNA(Pro) + AMP + diphosphate. Catalyzes the attachment of proline to tRNA(Pro) in a two-step reaction: proline is first activated by ATP to form Pro-AMP and then transferred to the acceptor end of tRNA(Pro). In Dinoroseobacter shibae (strain DSM 16493 / NCIMB 14021 / DFL 12), this protein is Proline--tRNA ligase.